A 414-amino-acid chain; its full sequence is MNRQSWLLNLSLLKTHPAFRAVFLARFISIVSLGLLGVAVPVQIQMMTHSTWQVGLSVTLTGGAMFIGLMVGGVLADRYERKKVILLARGTCGIGFIGLCVNALLPEPSLLAIYLLGLWDGFFASLGVTALLAATPALVGRENLMQAGAITMLTVRLGSVISPMLGGILLASGGVAWNYGLAAAGTFITLLPLLTLPRLPVPPQPRENPFIALLAAFRFLLASPLIGGIALLGGLVTMASAVRVLYPALAMSWQMSAAQIGLLYAAIPLGAAIGALTSGQLAHSVRPGLIMLVSTVGSFLAVGLFAIMPVWIAGVICLALFGWLSAISSLLQYTLLQTQTPENMLGRMNGLWTAQNVTGDAIGAALLGGLGAMMTPVASASVSGFGLVIIGLLLLLVLGELRRFRQTPPVSDAG.

Residues 1–21 are Cytoplasmic-facing; sequence MNRQSWLLNLSLLKTHPAFRA. The helical transmembrane segment at 22 to 42 threads the bilayer; sequence VFLARFISIVSLGLLGVAVPV. Over 43-55 the chain is Periplasmic; the sequence is QIQMMTHSTWQVG. A helical transmembrane segment spans residues 56–76; it reads LSVTLTGGAMFIGLMVGGVLA. Over 77–83 the chain is Cytoplasmic; the sequence is DRYERKK. A helical transmembrane segment spans residues 84–104; the sequence is VILLARGTCGIGFIGLCVNAL. Residues 105–109 lie on the Periplasmic side of the membrane; it reads LPEPS. The helical transmembrane segment at 110 to 130 threads the bilayer; it reads LLAIYLLGLWDGFFASLGVTA. The Cytoplasmic segment spans residues 131 to 156; the sequence is LLAATPALVGRENLMQAGAITMLTVR. A helical membrane pass occupies residues 157-177; the sequence is LGSVISPMLGGILLASGGVAW. A topological domain (periplasmic) is located at residue Asn178. A helical transmembrane segment spans residues 179–199; it reads YGLAAAGTFITLLPLLTLPRL. At 200 to 218 the chain is on the cytoplasmic side; that stretch reads PVPPQPRENPFIALLAAFR. The helical transmembrane segment at 219–239 threads the bilayer; that stretch reads FLLASPLIGGIALLGGLVTMA. Residues 240–256 lie on the Periplasmic side of the membrane; it reads SAVRVLYPALAMSWQMS. Residues 257–277 form a helical membrane-spanning segment; the sequence is AAQIGLLYAAIPLGAAIGALT. Over 278-287 the chain is Cytoplasmic; the sequence is SGQLAHSVRP. The chain crosses the membrane as a helical span at residues 288 to 307; sequence GLIMLVSTVGSFLAVGLFAI. Residues 308–313 are Periplasmic-facing; that stretch reads MPVWIA. Residues 314-336 form a helical membrane-spanning segment; sequence GVICLALFGWLSAISSLLQYTLL. The Cytoplasmic segment spans residues 337–356; that stretch reads QTQTPENMLGRMNGLWTAQN. The helical transmembrane segment at 357–377 threads the bilayer; it reads VTGDAIGAALLGGLGAMMTPV. Residue Ala378 is a topological domain, periplasmic. The helical transmembrane segment at 379 to 399 threads the bilayer; it reads SASVSGFGLVIIGLLLLLVLG. Over 400–414 the chain is Cytoplasmic; that stretch reads ELRRFRQTPPVSDAG.

The protein belongs to the major facilitator superfamily. EntS (TC 2.A.1.38) family.

It is found in the cell inner membrane. Functionally, component of an export pathway for enterobactin. The chain is Enterobactin exporter EntS from Salmonella typhimurium (strain LT2 / SGSC1412 / ATCC 700720).